Consider the following 448-residue polypeptide: Serine/threonine-protein phosphatase 2A regulatory subunit B'' subunit gamma (448 aa).

2 EF-hand domains span residues 268–303 and 336–371; these read PSAL…TLTC and KEPA…IQEQ. 5 residues coordinate Ca(2+): aspartate 281, aspartate 283, asparagine 285, methionine 287, and glutamate 292.

It localises to the nucleus. It is found in the cytoplasm. Its function is as follows. Possible role in the regulation of cell death. This Xenopus tropicalis (Western clawed frog) protein is Serine/threonine-protein phosphatase 2A regulatory subunit B'' subunit gamma (ppp2r3c).